The sequence spans 182 residues: UPF0397 protein BcerKBAB4_2500 (182 aa).

5 helical membrane passes run 9 to 29 (VVAIGIGAALYGVLGLWGFSI), 40 to 60 (AILTVFGALFGPVAGLLIGLI), 71 to 91 (WGIWWGWVISSGIIGLAMGLI), 114 to 134 (IAGLIGIVIAIIFAGSFDIIV), and 142 to 162 (IVIQVLGATIADVIVFLVLGL).

This sequence belongs to the UPF0397 family.

Its subcellular location is the cell membrane. This is UPF0397 protein BcerKBAB4_2500 from Bacillus mycoides (strain KBAB4) (Bacillus weihenstephanensis).